The following is a 410-amino-acid chain: Lysosome-associated membrane glycoprotein 2 (410 aa).

An N-terminal signal peptide occupies residues 1–28; the sequence is MVCFRLFPVPGSGLVLVCLVLGAVRSYA. Residues 29–192 form a first lumenal domain region; that stretch reads LELNLTDSEN…STNEFLCDKD (164 aa). Residues 29–375 lie on the Lumenal side of the membrane; that stretch reads LELNLTDSEN…QDCSADDDNF (347 aa). Asn-32 and Asn-38 each carry an N-linked (GlcNAc...) (polylactosaminoglycan) asparagine glycan. Cys-41 and Cys-79 are oxidised to a cystine. Residues Asn-49, Asn-58, Asn-75, Asn-101, Asn-123, and Asn-179 are each glycosylated (N-linked (GlcNAc...) asparagine). Cys-153 and Cys-189 are disulfide-bonded. The hinge stretch occupies residues 193–228; that stretch reads KTSTVAPTIHTTVPSPTTTPTPKEKPEAGTYSVNNG. The O-linked (GalNAc...) serine glycan is linked to Ser-195. O-linked (GalNAc...) threonine glycans are attached at residues Thr-196, Thr-200, Thr-203, and Thr-204. Residues 199–213 are compositionally biased toward low complexity; it reads PTIHTTVPSPTTTPT. A disordered region spans residues 199–221; the sequence is PTIHTTVPSPTTTPTPKEKPEAG. Ser-207 carries an O-linked (GalNAc...) serine; partial glycan. Residue Thr-209 is glycosylated (O-linked (GalNAc...) threonine; partial). Residues Thr-210 and Thr-211 are each glycosylated (O-linked (GalNAc...) threonine). Residue Thr-213 is glycosylated (O-linked (GalNAc...) threonine; partial). N-linked (GlcNAc...) asparagine glycosylation is found at Asn-229, Asn-242, Asn-257, Asn-275, and Asn-300. A second lumenal domain region spans residues 229–375; the sequence is NDTCLLATMG…QDCSADDDNF (147 aa). Cys-232 and Cys-265 are disulfide-bonded. Asn-307 carries an N-linked (GlcNAc...) (polylactosaminoglycan) asparagine glycan. N-linked (GlcNAc...) asparagine glycosylation is found at Asn-317 and Asn-356. Cys-331 and Cys-368 form a disulfide bridge. Residues 376 to 399 traverse the membrane as a helical segment; it reads LVPIAVGAALAGVLILVLLAYFIG. The Cytoplasmic portion of the chain corresponds to 400–410; the sequence is LKHHHAGYEQF. The tract at residues 401 to 404 is important for binding and subsequent lysosomal degradation of target proteins; it reads KHHH.

This sequence belongs to the LAMP family. In terms of assembly, monomer. Homodimer. Homotrimer. Forms large homooligomers. Interacts (via its cytoplasmic region) with HSPA8; HSPA8 mediates recruitment of proteins with a KFERQ motif to the surface of the lysosome for chaperone-mediated autophagy. Interacts with HSP90 in the lysosome lumen; this enhances LAMP2 stability. Interacts with MLLT11. Interacts with ABCB9. Interacts with FURIN. Interacts with CT55; this interaction may be important for LAMP2 protein stability. Interacts with TMEM175; inhibiting the proton channel activity of TMEM175. Forms a ternary complex with RAB7A and RUFY4 (via RUN domain); the interaction with RAB7A is mediated by RUFY4 (via RUN and coiled coil domains). (Microbial infection) Interacts with mumps virus protein F; this interaction promotes protein F cleavage by FURIN. Post-translationally, O- and N-glycosylated; some of the 16 N-linked glycans are polylactosaminoglycans. In terms of tissue distribution, isoform LAMP-2A is highly expressed in placenta, lung and liver, less in kidney and pancreas, low in brain and skeletal muscle. Isoform LAMP-2B is detected in spleen, thymus, prostate, testis, small intestine, colon, skeletal muscle, brain, placenta, lung, kidney, ovary and pancreas and liver. Isoform LAMP-2C is detected in small intestine, colon, heart, brain, skeletal muscle, and at lower levels in kidney and placenta.

It is found in the lysosome membrane. The protein localises to the endosome membrane. It localises to the cell membrane. The protein resides in the cytoplasmic vesicle. Its subcellular location is the autophagosome membrane. In terms of biological role, lysosomal membrane glycoprotein which plays an important role in lysosome biogenesis, lysosomal pH regulation and autophagy. Acts as an important regulator of lysosomal lumen pH regulation by acting as a direct inhibitor of the proton channel TMEM175, facilitating lysosomal acidification for optimal hydrolase activity. Plays an important role in chaperone-mediated autophagy, a process that mediates lysosomal degradation of proteins in response to various stresses and as part of the normal turnover of proteins with a long biological half-live. Functions by binding target proteins, such as GAPDH, NLRP3 and MLLT11, and targeting them for lysosomal degradation. In the chaperone-mediated autophagy, acts downstream of chaperones, such as HSPA8/HSC70, which recognize and bind substrate proteins and mediate their recruitment to lysosomes, where target proteins bind LAMP2. Plays a role in lysosomal protein degradation in response to starvation. Required for the fusion of autophagosomes with lysosomes during autophagy. Cells that lack LAMP2 express normal levels of VAMP8, but fail to accumulate STX17 on autophagosomes, which is the most likely explanation for the lack of fusion between autophagosomes and lysosomes. Required for normal degradation of the contents of autophagosomes. Required for efficient MHC class II-mediated presentation of exogenous antigens via its function in lysosomal protein degradation; antigenic peptides generated by proteases in the endosomal/lysosomal compartment are captured by nascent MHC II subunits. Is not required for efficient MHC class II-mediated presentation of endogenous antigens. Modulates chaperone-mediated autophagy. Decreases presentation of endogenous antigens by MHCII. Does not play a role in the presentation of exogenous and membrane-derived antigens by MHCII. Functionally, (Microbial infection) Supports the FURIN-mediated cleavage of mumps virus fusion protein F by interacting with both FURIN and the unprocessed form but not the processed form of the viral protein F. This Homo sapiens (Human) protein is Lysosome-associated membrane glycoprotein 2 (LAMP2).